The sequence spans 138 residues: MLKEFQEFALKGNMVDLAIGVIIGGAFGGLVNSIVNDIIMPIIGLITGGIDFSNMFIQLAGDPKTTLAAAREAGATIAYGNFITLLINFLIIAWVLFLVVKLMNRLKKREEAKPAPAAPSEEVLLTEIRDILAKQQKA.

The next 3 membrane-spanning stretches (helical) occupy residues 15–35, 38–58, and 80–100; these read VDLA…NSIV, IIMP…MFIQ, and GNFI…FLVV.

It belongs to the MscL family. In terms of assembly, homopentamer.

It is found in the cell inner membrane. Channel that opens in response to stretch forces in the membrane lipid bilayer. May participate in the regulation of osmotic pressure changes within the cell. This Brucella canis (strain ATCC 23365 / NCTC 10854 / RM-666) protein is Large-conductance mechanosensitive channel.